Reading from the N-terminus, the 126-residue chain is uncharacterized protein (126 aa).

The helical transmembrane segment at 48–68 (ILCMFPWQCVVYVFSNFVWLV) threads the bilayer.

The protein resides in the membrane. This is an uncharacterized protein from Homo sapiens (Human).